Here is a 47-residue protein sequence, read N- to C-terminus: uncharacterized protein (47 aa).

This is an uncharacterized protein from Treponema pallidum (strain Nichols).